The primary structure comprises 331 residues: Cytosolic sulfotransferase 8 (331 aa).

Basic and acidic residues predominate over residues 1 to 11 (MGEKDIPRNLK). The disordered stretch occupies residues 1 to 31 (MGEKDIPRNLKEEEEEEEENQSEETKSLISS). The span at 12 to 22 (EEEEEEEENQS) shows a compositional bias: acidic residues. A 3'-phosphoadenylyl sulfate-binding site is contributed by 80–85 (KSGTTW). His145 functions as the Proton acceptor in the catalytic mechanism. Residues Arg167, Ser175, Tyr231, and 297-299 (RKG) each bind 3'-phosphoadenylyl sulfate.

Belongs to the sulfotransferase 1 family. Expressed in seedlings and roots.

The protein resides in the cytoplasm. Sulfotransferase that utilizes 3'-phospho-5'-adenylyl sulfate (PAPS) as sulfonate donor. No activity with brassinosteroids. In Arabidopsis thaliana (Mouse-ear cress), this protein is Cytosolic sulfotransferase 8 (SOT8).